The sequence spans 130 residues: MEAQTLYATGKRKTAIARTWMKPGSGKITVNGKDADAHFTTNAARIIMRESLKITETLESYDVDIRVIGGGITGQAGAARHGISKILAGLDPEMRQKLKANGFLTRDARVKERKKYGQRGARARYQFSKR.

The protein belongs to the universal ribosomal protein uS9 family.

This Desulfosudis oleivorans (strain DSM 6200 / JCM 39069 / Hxd3) (Desulfococcus oleovorans) protein is Small ribosomal subunit protein uS9.